Here is a 374-residue protein sequence, read N- to C-terminus: Probable plastid-lipid-associated protein 3, chloroplastic (374 aa).

The transit peptide at 1-46 (MAMPPPLFAAASHASLLLPSPTIHSSTGSRRPFRLPLRSSRRPPVA) directs the protein to the chloroplast. The interval 19-148 (PSPTIHSSTG…EDNEEERREE (130 aa)) is disordered. The span at 28–54 (GSRRPFRLPLRSSRRPPVAAAAASGVP) shows a compositional bias: low complexity. Composition is skewed to pro residues over residues 64-73 (APEPPSQPDP) and 127-136 (PAPPPPPPPV).

The protein belongs to the PAP/fibrillin family.

The protein localises to the plastid. It localises to the chloroplast. In Oryza sativa subsp. japonica (Rice), this protein is Probable plastid-lipid-associated protein 3, chloroplastic (PAP3).